The sequence spans 716 residues: tRNA(Met) cytidine acetyltransferase TmcA (716 aa).

ATP contacts are provided by residues glutamine 192, 217–226, and arginine 364; that span reads GRGKSYVIGL. One can recognise an N-acetyltransferase domain in the interval 401-567; sequence REVLARDREV…KNVALAKPLD (167 aa). Residues 493–495 and 500–506 contribute to the acetyl-CoA site; these read IAV and QRRGLGS.

It belongs to the RNA cytidine acetyltransferase family. TmcA subfamily.

The protein localises to the cytoplasm. It carries out the reaction cytidine(34) in elongator tRNA(Met) + acetyl-CoA + ATP + H2O = N(4)-acetylcytidine(34) in elongator tRNA(Met) + ADP + phosphate + CoA + H(+). Its function is as follows. Catalyzes the formation of N(4)-acetylcytidine (ac(4)C) at the wobble position of tRNA(Met), by using acetyl-CoA as an acetyl donor and ATP (or GTP). The sequence is that of tRNA(Met) cytidine acetyltransferase TmcA from Aeropyrum pernix (strain ATCC 700893 / DSM 11879 / JCM 9820 / NBRC 100138 / K1).